The following is a 581-amino-acid chain: ATP-dependent RNA helicase DBP9 (581 aa).

The short motif at 15–43 (SSWDSFHLDARLVQAIDQLGFEHPTLIQA) is the Q motif element. A Helicase ATP-binding domain is found at 47 to 231 (PLALEEKRDI…TRFCSRPAIL (185 aa)). 60–67 (ASTGSGKT) contacts ATP. The DEAD box motif lies at 177-180 (DEVD). The Helicase C-terminal domain maps to 260–461 (YVIFKLNLIK…EIKPYQFDMK (202 aa)). Basic and acidic residues predominate over residues 334–349 (VEKDEQQQEESQDKKA). Disordered regions lie at residues 334-368 (VEKDEQQQEESQDKKASSAKTKQSKKSKKQKKDTE) and 546-581 (KKIGFVPFHKNKVHKNRKKKPTGRKADPLKSFKNRK). Composition is skewed to basic residues over residues 355-364 (KQSKKSKKQK) and 554-568 (HKNKVHKNRKKKPTG).

It belongs to the DEAD box helicase family. DDX56/DBP9 subfamily.

It localises to the nucleus. The protein localises to the nucleolus. The catalysed reaction is ATP + H2O = ADP + phosphate + H(+). Functionally, ATP-binding RNA helicase involved in the biogenesis of 60S ribosomal subunits and is required for the normal formation of 25S and 5.8S rRNAs. The chain is ATP-dependent RNA helicase DBP9 (DBP9) from Scheffersomyces stipitis (strain ATCC 58785 / CBS 6054 / NBRC 10063 / NRRL Y-11545) (Yeast).